A 107-amino-acid polypeptide reads, in one-letter code: BolA-like protein 3 (107 aa).

This sequence belongs to the BolA/IbaG family. Interacts with NFU1. Widely expressed.

The protein resides in the mitochondrion. Functionally, acts as a mitochondrial iron-sulfur (Fe-S) cluster assembly factor that facilitates (Fe-S) cluster insertion into a subset of mitochondrial proteins. Probably acts together with NFU1. The chain is BolA-like protein 3 from Homo sapiens (Human).